A 485-amino-acid polypeptide reads, in one-letter code: Glutamyl-tRNA(Gln) amidotransferase subunit A (485 aa).

Catalysis depends on charge relay system residues K79 and S154. The Acyl-ester intermediate role is filled by S178.

This sequence belongs to the amidase family. GatA subfamily. As to quaternary structure, heterotrimer of A, B and C subunits.

The catalysed reaction is L-glutamyl-tRNA(Gln) + L-glutamine + ATP + H2O = L-glutaminyl-tRNA(Gln) + L-glutamate + ADP + phosphate + H(+). In terms of biological role, allows the formation of correctly charged Gln-tRNA(Gln) through the transamidation of misacylated Glu-tRNA(Gln) in organisms which lack glutaminyl-tRNA synthetase. The reaction takes place in the presence of glutamine and ATP through an activated gamma-phospho-Glu-tRNA(Gln). This is Glutamyl-tRNA(Gln) amidotransferase subunit A from Staphylococcus epidermidis (strain ATCC 12228 / FDA PCI 1200).